The sequence spans 485 residues: Glutamate--tRNA ligase (485 aa).

The 'HIGH' region signature appears at 12 to 22 (PSPTGYMHVGN). 4 residues coordinate Zn(2+): C109, C111, C136, and H138. Residues 253–257 (KLSKR) carry the 'KMSKS' region motif. K256 contacts ATP.

Belongs to the class-I aminoacyl-tRNA synthetase family. Glutamate--tRNA ligase type 1 subfamily. As to quaternary structure, monomer. The cofactor is Zn(2+).

It is found in the cytoplasm. It carries out the reaction tRNA(Glu) + L-glutamate + ATP = L-glutamyl-tRNA(Glu) + AMP + diphosphate. Catalyzes the attachment of glutamate to tRNA(Glu) in a two-step reaction: glutamate is first activated by ATP to form Glu-AMP and then transferred to the acceptor end of tRNA(Glu). In Clostridium botulinum (strain Eklund 17B / Type B), this protein is Glutamate--tRNA ligase.